The chain runs to 501 residues: ATP-dependent rRNA helicase RRP3 (501 aa).

The stretch at 3–44 (KIVKRKEKKANDELTSLAEKIRAKALENQKKLIEAEKEGGSE) forms a coiled coil. The disordered stretch occupies residues 36-79 (EAEKEGGSESDSEEDATAEKKKVLKSKSKSTVSTQNENTNEDES). Ser-43, Ser-45, and Ser-47 each carry phosphoserine. The short motif at 81–109 (ESFSELNLVPELIQACKNLNYSKPTPIQS) is the Q motif element. The Helicase ATP-binding domain occupies 112-284 (IPPALEGHDI…RASLTNPVKC (173 aa)). 125–132 (AQTGSGKT) serves as a coordination point for ATP. Residues 231–234 (DEAD) carry the DEAD box motif. Positions 307–461 (LKNTYLIYLL…NIILTLRDSV (155 aa)) constitute a Helicase C-terminal domain. The tract at residues 480 to 501 (IARGKGRRGRMMTRENMDMGER) is disordered. Positions 491–501 (MTRENMDMGER) are enriched in basic and acidic residues.

Belongs to the DEAD box helicase family. DDX47/RRP3 subfamily. In terms of assembly, interacts with the SSU processome.

Its subcellular location is the nucleus. It carries out the reaction ATP + H2O = ADP + phosphate + H(+). With respect to regulation, ATPase activity is stimulated upon the addition of RNA. ATP-dependent rRNA helicase required for pre-ribosomal RNA processing. Involved in the maturation of the 35S-pre-rRNA and to its cleavage to mature 18S rRNA. The sequence is that of ATP-dependent rRNA helicase RRP3 from Saccharomyces cerevisiae (strain ATCC 204508 / S288c) (Baker's yeast).